The chain runs to 652 residues: Leucine-rich repeat-containing protein 4 (652 aa).

The N-terminal stretch at 1-40 (MKLLWQVTVHHTWNAVLLPVVYLTAQVWILCAAIAAAASA) is a signal peptide. An LRRNT domain is found at 41 to 74 (GPQNCPSVCSCSNQFSKVVCTRRGLSEVPQGIPS). The Extracellular portion of the chain corresponds to 41-526 (GPQNCPSVCS…SLDEVMKTTK (486 aa)). Disulfide bonds link Cys45–Cys51 and Cys49–Cys60. LRR repeat units follow at residues 75–96 (NTRY…TFRH), 99–120 (HLEV…AFNG), 123–144 (SLNT…AFEY), 147–168 (KLRE…AFNR), 171–193 (SLMR…AFEG), 196–217 (NLKY…TPLV), 218–239 (GLEE…SFHG), 242–263 (SLKK…AFDG), and 266–287 (SLVE…LFTP). Asn276, Asn321, Asn362, Asn387, Asn409, Asn433, Asn439, and Asn449 each carry an N-linked (GlcNAc...) asparagine glycan. Residues 299-351 (NPWNCDCDILWLAWWLREYIPTNSTCCGRCHAPMHMRGRYLVEVDQAAFQCSA) form the LRRCT domain. 2 cysteine pairs are disulfide-bonded: Cys303/Cys328 and Cys305/Cys349. One can recognise an Ig-like domain in the interval 352–441 (PFIMDAPRDL…SNASAYLNVS (90 aa)). Cys373 and Cys423 are disulfide-bonded. Residues 527 to 547 (IIIGCFVAVTLLAAAMLIVFY) form a helical membrane-spanning segment. At 548–652 (KLRKRHQQRS…TKDKVQETQI (105 aa)) the chain is on the cytoplasmic side.

As to quaternary structure, interacts (via LRR repeats) with NTNG2. Interacts with DLG4. Forms a complex with DLG4 and with NMDA receptors. In terms of processing, N-glycosylated. In terms of tissue distribution, specifically expressed in brain. In the hippocampus, parietal cortex and piriform cortex expressed in proximal segments of CA1 pyramidal neurons.

It localises to the membrane. The protein resides in the postsynaptic cell membrane. In terms of biological role, synaptic adhesion protein. Regulates the formation of exitatory synapses through the recruitment of pre-and-postsynaptic proteins. Organize the lamina/pathway-specific differentiation of dendrites. Plays an important role for auditory synaptic responses. Involved in the suppression of glioma. This is Leucine-rich repeat-containing protein 4 (Lrrc4) from Mus musculus (Mouse).